The primary structure comprises 859 residues: Photoactivated adenylate cyclase subunit beta-like protein ST- (859 aa).

The 94-residue stretch at 56–149 (LRRLMYLSKS…GRMYGDWHMK (94 aa)) folds into the BLUF 1 domain. A disordered region spans residues 420 to 444 (RPPIFDDTPKSNPRPRTPGYGGRQR). Positions 471–563 (LTTLTYISQA…RVYTSEWTLT (93 aa)) constitute a BLUF 2 domain. The tract at residues 814–859 (ARSGEQPLTEPEQAKPDFRVSPGRDRHGVSGRRSNSSQGKGSIQVG) is disordered. A compositionally biased stretch (basic and acidic residues) spans 825–841 (EQAKPDFRVSPGRDRHG). Polar residues predominate over residues 845–859 (RRSNSSQGKGSIQVG).

In terms of assembly, heterotetramer of two alpha and two beta subunits.

Its subcellular location is the cell projection. It localises to the cilium. The protein resides in the flagellum. The protein is Photoactivated adenylate cyclase subunit beta-like protein ST- of Euglena gracilis.